A 96-amino-acid polypeptide reads, in one-letter code: Large ribosomal subunit protein uL23 (96 aa).

The protein belongs to the universal ribosomal protein uL23 family. As to quaternary structure, part of the 50S ribosomal subunit. Contacts protein L29, and trigger factor when it is bound to the ribosome.

Functionally, one of the early assembly proteins it binds 23S rRNA. One of the proteins that surrounds the polypeptide exit tunnel on the outside of the ribosome. Forms the main docking site for trigger factor binding to the ribosome. The polypeptide is Large ribosomal subunit protein uL23 (Alkaliphilus metalliredigens (strain QYMF)).